A 333-amino-acid polypeptide reads, in one-letter code: 6-phosphogluconolactonase (333 aa).

It belongs to the cycloisomerase 2 family.

The enzyme catalyses 6-phospho-D-glucono-1,5-lactone + H2O = 6-phospho-D-gluconate + H(+). Its pathway is carbohydrate degradation; pentose phosphate pathway; D-ribulose 5-phosphate from D-glucose 6-phosphate (oxidative stage): step 2/3. Catalyzes the hydrolysis of 6-phosphogluconolactone to 6-phosphogluconate. This Buchnera aphidicola subsp. Schizaphis graminum (strain Sg) protein is 6-phosphogluconolactonase.